The primary structure comprises 463 residues: Chaperone SurA (463 aa).

The first 25 residues, 1 to 25 (MTKPFSVVLASLLAITSTISPLASA), serve as a signal peptide directing secretion. PpiC domains lie at 174-276 (GSKY…KLME) and 289-388 (VTEY…QRVG). 2 disordered regions span residues 329-348 (ATAK…GDLG) and 434-463 (GDRA…KPTR). The segment covering 439 to 452 (NNATAAPAKSADPA) has biased composition (low complexity). The span at 453 to 463 (LPAPPPAKPTR) shows a compositional bias: pro residues.

Its subcellular location is the periplasm. The enzyme catalyses [protein]-peptidylproline (omega=180) = [protein]-peptidylproline (omega=0). Functionally, chaperone involved in the correct folding and assembly of outer membrane proteins. Recognizes specific patterns of aromatic residues and the orientation of their side chains, which are found more frequently in integral outer membrane proteins. May act in both early periplasmic and late outer membrane-associated steps of protein maturation. The protein is Chaperone SurA of Xanthomonas oryzae pv. oryzae (strain KACC10331 / KXO85).